The sequence spans 315 residues: Transmembrane protein 231 (315 aa).

A helical transmembrane segment spans residues 23–43 (AALFLLLTTALTYIPPLLVAF). N-linked (GlcNAc...) asparagine glycosylation is found at Asn-194, Asn-199, and Asn-221. Residues 262–282 (FWEMIKFAWIQYVSILLIFLW) traverse the membrane as a helical segment.

Belongs to the TMEM231 family. Part of the tectonic-like complex (also named B9 complex). Interacts with TMEM107.

Its subcellular location is the cell projection. It is found in the cilium membrane. In terms of biological role, transmembrane component of the tectonic-like complex, a complex localized at the transition zone of primary cilia and acting as a barrier that prevents diffusion of transmembrane proteins between the cilia and plasma membranes. Required for ciliogenesis and sonic hedgehog/SHH signaling. This is Transmembrane protein 231 (Tmem231) from Mus musculus (Mouse).